A 255-amino-acid chain; its full sequence is uncharacterized protein (255 aa).

Disordered stretches follow at residues 112–145 and 157–183; these read CWPGSPLGGTGPPTNRPPRSRAWNRYRSDRPSPG and GLAEHQGGGDGDVERAHAGNHRNPDAQ.

This is an uncharacterized protein from Rhodospirillum rubrum.